A 394-amino-acid polypeptide reads, in one-letter code: RILP-like protein 1 (394 aa).

One can recognise an RH1 domain in the interval 2 to 89 (EGISALEKNV…RLERMDRIEK (88 aa)). Residues 68–327 (EMEELRLELD…EAEEENKLPQ (260 aa)) adopt a coiled-coil conformation. An RH2 domain is found at 282–347 (RPRFTLQELR…IPQESGIKRL (66 aa)).

It belongs to the RILPL family.

Its subcellular location is the cytoplasm. It is found in the cytosol. The protein resides in the cytoskeleton. The protein localises to the microtubule organizing center. It localises to the centrosome. Its subcellular location is the cell projection. It is found in the cilium. In terms of biological role, plays a role in the regulation of cell shape and polarity. Plays a role in cellular protein transport, including protein transport away from primary cilia. Neuroprotective protein. The polypeptide is RILP-like protein 1 (rilpl1) (Xenopus laevis (African clawed frog)).